The following is a 567-amino-acid chain: Phenylalanine ammonia-lyase (567 aa).

The active-site Proton donor/acceptor is Tyr-78. The 5-imidazolinone (Ala-Gly) cross-link spans 167-169 (ASG). A 2,3-didehydroalanine (Ser) modification is found at Ser-168. (E)-cinnamate contacts are provided by Asn-223, Gln-311, Arg-317, Asn-347, Lys-419, Glu-448, and Asn-451.

The protein belongs to the PAL/histidase family. In terms of assembly, homotetramer. In terms of processing, contains an active site 4-methylidene-imidazol-5-one (MIO), which is formed autocatalytically by cyclization and dehydration of residues Ala-Ser-Gly.

It is found in the cytoplasm. The catalysed reaction is L-phenylalanine = (E)-cinnamate + NH4(+). It functions in the pathway phenylpropanoid metabolism; trans-cinnamate biosynthesis; trans-cinnamate from L-phenylalanine: step 1/1. Catalyzes the non-oxidative deamination of L-phenylalanine to form trans-cinnamic acid, the first step in the phenylpropanoid pathway. The chain is Phenylalanine ammonia-lyase from Trichormus variabilis (strain ATCC 29413 / PCC 7937) (Anabaena variabilis).